The sequence spans 129 residues: MRLCRVWLSVCLCAVVLGQCQRETAEKNDYYRVPHYWDACSRALPDQTRYKYVEQLVDLTLNYHYDASHGLDNFDVLKRINVTEVSLLISDFRRQNRRGGTNKRTTFNAAGSLAPHARSLEFSVRLFAN.

Residues 1–18 (MRLCRVWLSVCLCAVVLG) form the signal peptide.

In terms of assembly, forms the envelope pentamer complex (PC) composed of gH, gL, UL128, UL130, and UL131A. The pentamer interacts with host NRP2. The interaction with gH is important for the formation of UL128, UL130, gH-gL complex.

Its subcellular location is the virion membrane. In terms of biological role, plays a role in viral entry into host cells. Forms a pentameric complex at the surface of the viral envelope together with gH, gL, UL130 and UL131. This complex is required for entry in epithelial, endothelial and myeloid host cells. Mechanistically, engages host receptor(s) including neurophilin 2/NRP2 to mediate infection. Contributes to the formation of the complex between UL128, UL130 and gH-gL. The chain is Protein UL131A (UL131A) from Human cytomegalovirus (strain Merlin) (HHV-5).